A 250-amino-acid chain; its full sequence is 2,3-bisphosphoglycerate-dependent phosphoglycerate mutase (250 aa).

Substrate is bound by residues 10 to 17, 23 to 24, arginine 62, 89 to 92, lysine 100, 116 to 117, and 185 to 186; these read RHGESQWN, TG, ERHY, RR, and GN. The active-site Tele-phosphohistidine intermediate is the histidine 11. The Proton donor/acceptor role is filled by glutamate 89.

The protein belongs to the phosphoglycerate mutase family. BPG-dependent PGAM subfamily. As to quaternary structure, homodimer.

It catalyses the reaction (2R)-2-phosphoglycerate = (2R)-3-phosphoglycerate. The protein operates within carbohydrate degradation; glycolysis; pyruvate from D-glyceraldehyde 3-phosphate: step 3/5. Catalyzes the interconversion of 2-phosphoglycerate and 3-phosphoglycerate. In Shigella boydii serotype 4 (strain Sb227), this protein is 2,3-bisphosphoglycerate-dependent phosphoglycerate mutase.